A 203-amino-acid polypeptide reads, in one-letter code: MSWVQLRGHRFHFIQASFDAESNEAVQVIHITDLVRVWSCTCSRNQIVNQAESERCPIDPFQTFETLVDVLAEVLVNVSSESRIQLRGSNDEGSLKIFCTSKIAKDIFLEWNWTLWLTPPETIAKMVWFPLINHHLFESETDTSPGSLMSIIRDQKSLLNDKTWFKEALNERSSSSNPSTPRKRSAFADIISPKRPRTRYDFV.

The protein belongs to the XRCC4-XLF family. XLF subfamily.

It localises to the nucleus. In terms of biological role, involved in double-strand break repair via non-homologous end joining (NHEJ); the repair of a double-strand break in DNA in which the two broken ends are rejoined with little or no sequence complementarity. Has a role in meiosis. The sequence is that of Xrcc4-like factor 1 (xlf1) from Schizosaccharomyces pombe (strain 972 / ATCC 24843) (Fission yeast).